The sequence spans 66 residues: Large ribosomal subunit protein bL33c (66 aa).

Belongs to the bacterial ribosomal protein bL33 family.

It localises to the plastid. Its subcellular location is the chloroplast. The polypeptide is Large ribosomal subunit protein bL33c (Cicer arietinum (Chickpea)).